Here is a 363-residue protein sequence, read N- to C-terminus: 3-isopropylmalate dehydrogenase (363 aa).

G78 to E91 contacts NAD(+). Substrate-binding residues include R99, R109, R138, and D227. D227, D251, and D255 together coordinate Mg(2+). G285–N297 is an NAD(+) binding site.

This sequence belongs to the isocitrate and isopropylmalate dehydrogenases family. LeuB type 1 subfamily. As to quaternary structure, homodimer. Requires Mg(2+) as cofactor. It depends on Mn(2+) as a cofactor.

It localises to the cytoplasm. The catalysed reaction is (2R,3S)-3-isopropylmalate + NAD(+) = 4-methyl-2-oxopentanoate + CO2 + NADH. Its pathway is amino-acid biosynthesis; L-leucine biosynthesis; L-leucine from 3-methyl-2-oxobutanoate: step 3/4. Functionally, catalyzes the oxidation of 3-carboxy-2-hydroxy-4-methylpentanoate (3-isopropylmalate) to 3-carboxy-4-methyl-2-oxopentanoate. The product decarboxylates to 4-methyl-2 oxopentanoate. This chain is 3-isopropylmalate dehydrogenase (leuB), found in Buchnera aphidicola subsp. Rhopalosiphum padi.